We begin with the raw amino-acid sequence, 360 residues long: NADH-quinone oxidoreductase subunit H (360 aa).

8 consecutive transmembrane segments (helical) span residues 22–42, 97–117, 130–150, 170–190, 208–228, 255–275, 292–312, and 336–356; these read ITVG…IPLI, ALFY…WAVI, IGLL…IIAG, ISYE…SGSM, VFSW…ISAV, GFAF…IAAL, WGFI…AVLY, and VLIP…ISPL.

Belongs to the complex I subunit 1 family. As to quaternary structure, NDH-1 is composed of 14 different subunits. Subunits NuoA, H, J, K, L, M, N constitute the membrane sector of the complex.

It localises to the cell inner membrane. It carries out the reaction a quinone + NADH + 5 H(+)(in) = a quinol + NAD(+) + 4 H(+)(out). NDH-1 shuttles electrons from NADH, via FMN and iron-sulfur (Fe-S) centers, to quinones in the respiratory chain. The immediate electron acceptor for the enzyme in this species is believed to be ubiquinone. Couples the redox reaction to proton translocation (for every two electrons transferred, four hydrogen ions are translocated across the cytoplasmic membrane), and thus conserves the redox energy in a proton gradient. This subunit may bind ubiquinone. The polypeptide is NADH-quinone oxidoreductase subunit H (Neisseria meningitidis serogroup C / serotype 2a (strain ATCC 700532 / DSM 15464 / FAM18)).